The chain runs to 528 residues: UDP-glucuronosyltransferase 1A9 (528 aa).

The signal sequence occupies residues 1-23 (MAPVAFPTSFFLCLLLASGLAQA). Asparagine 69 is a glycosylation site (N-linked (GlcNAc...) asparagine). Lysine 97 is modified (N6-succinyllysine). N-linked (GlcNAc...) asparagine glycosylation is found at asparagine 290 and asparagine 428. Residues 486–506 (VIGFLLAIVLTVVFIVFKCCA) form a helical membrane-spanning segment.

The protein belongs to the UDP-glycosyltransferase family. Homodimer. Homooligomer. Interacts with UGT1A1, UGT1A3, UGT1A4, UGT1A6, UGT1A7, UGT1A8 and UGT1A10 to form heterodimers. Highly expressed in liver and at lower levels in stomach and kidney.

The protein resides in the endoplasmic reticulum membrane. The enzyme catalyses glucuronate acceptor + UDP-alpha-D-glucuronate = acceptor beta-D-glucuronoside + UDP + H(+). It carries out the reaction 2-hydroxy-17beta-estradiol + UDP-alpha-D-glucuronate = 2-hydroxy-17beta-estradiol 3-O-(beta-D-glucuronate) + UDP + H(+). The catalysed reaction is 4-hydroxy-17beta-estradiol + UDP-alpha-D-glucuronate = 17beta-estradiol 4-O-(beta-D-glucuronate) + UDP + H(+). It catalyses the reaction 2-hydroxyestrone + UDP-alpha-D-glucuronate = 2-hydroxyestrone 3-O-(beta-D-glucuronate) + UDP + H(+). The enzyme catalyses 4-hydroxyestrone + UDP-alpha-D-glucuronate = estrone 4-O-(beta-D-glucuronate) + UDP + H(+). It carries out the reaction prunetin + UDP-alpha-D-glucuronate = prunetin-5-O-beta-D-glucuronide + UDP. The catalysed reaction is 8-iso-prostaglandin F2alpha + UDP-alpha-D-glucuronate = 8-iso-prostaglandin F2alpha-glucuronide + UDP + H(+). It catalyses the reaction 5-epi-5-F2t-IsoP + UDP-alpha-D-glucuronate = 5-epi-5-F2t-IsoP-glucuronide + UDP + H(+). The enzyme catalyses (5Z,8Z,11Z,14Z)-eicosatetraenoate + UDP-alpha-D-glucuronate = O-[(5Z),(8Z),(11Z),(14Z)-eicosatetraenoyl]-beta-D-glucuronate + UDP. It carries out the reaction 15-hydroxy-(5Z,8Z,11Z,13E)-eicosatetraenoate + UDP-alpha-D-glucuronate = 15-O-(beta-D-glucuronosyl)-(5Z,8Z,11Z,14Z)-eicosatetraenoate + UDP + H(+). The catalysed reaction is prostaglandin B1 + UDP-alpha-D-glucuronate = 15-O-(beta-D-glucuronosyl)-prostaglandin B1 + UDP + H(+). It catalyses the reaction (E)-ferulate + UDP-alpha-D-glucuronate = (E)-4-O-(beta-D-glucuronosyl)-ferulate + UDP + H(+). The enzyme catalyses (E)-ferulate + UDP-alpha-D-glucuronate = (E)-ferulic acid beta-D-glucuronate ester + UDP. It carries out the reaction candesartan + UDP-alpha-D-glucuronate = candesartan O-beta-D-glucuronoside + UDP. The catalysed reaction is SN-38 + UDP-alpha-D-glucuronate = SN-38 O-beta-D-glucuronide + UDP + H(+). It catalyses the reaction mycophenolate + UDP-alpha-D-glucuronate = mycophenolate 7-O-beta-D-glucuronide + UDP + H(+). In terms of biological role, UDP-glucuronosyltransferase (UGT) that catalyzes phase II biotransformation reactions in which lipophilic substrates are conjugated with glucuronic acid to increase the metabolite's water solubility, thereby facilitating excretion into either the urine or bile. Essential for the elimination and detoxification of drugs, xenobiotics and endogenous compounds. Catalyzes the glucuronidation of endogenous estrogen hormones such as estradiol and estrone. Involved in the glucuronidation of arachidonic acid (AA) and AA-derived eicosanoids including 15-HETE, PGB1 and F2-isoprostanes (8-iso-PGF2alpha and 5-epi-5-F2t-IsoP). Glucuronates the phytochemical ferulic acid efficently at both the phenolic or the carboxylic acid group. Also catalyzes the glucuronidation of the isoflavones genistein, daidzein, glycitein, formononetin, biochanin A and prunetin, which are phytoestrogens with anticancer and cardiovascular properties. Involved in the glucuronidation of the AGTR1 angiotensin receptor antagonist caderastan, a drug which can inhibit the effect of angiotensin II. Involved in the biotransformation of 7-ethyl-10-hydroxycamptothecin (SN-38), the pharmacologically active metabolite of the anticancer drug irinotecan. Also metabolizes mycophenolate, an immunosuppressive agent. The protein is UDP-glucuronosyltransferase 1A9 of Mus musculus (Mouse).